A 387-amino-acid chain; its full sequence is Phosphoglycerate kinase (387 aa).

Substrate contacts are provided by residues 21–23 (DLN), Arg-36, 59–62 (HLGR), Arg-113, and Arg-146. Residues Lys-197, Glu-314, and 340-343 (GGDT) each bind ATP.

It belongs to the phosphoglycerate kinase family. As to quaternary structure, monomer.

It localises to the cytoplasm. It carries out the reaction (2R)-3-phosphoglycerate + ATP = (2R)-3-phospho-glyceroyl phosphate + ADP. It participates in carbohydrate degradation; glycolysis; pyruvate from D-glyceraldehyde 3-phosphate: step 2/5. This chain is Phosphoglycerate kinase, found in Pseudomonas putida (strain ATCC 47054 / DSM 6125 / CFBP 8728 / NCIMB 11950 / KT2440).